The primary structure comprises 276 residues: Small ribosomal subunit protein uS2 (276 aa).

2 disordered regions span residues 209–233 and 252–276; these read AQEA…AADV and VDWS…SSWE. The segment covering 211–231 has biased composition (low complexity); that stretch reads EAAAAAQAAKETAEPTTEGAA.

This sequence belongs to the universal ribosomal protein uS2 family. In terms of assembly, component of the small ribosomal subunit. Mature ribosomes consist of a small (40S) and a large (60S) subunit. The 40S subunit contains about 33 different proteins and 1 molecule of RNA (18S). The 60S subunit contains about 49 different proteins and 3 molecules of RNA (25S, 5.8S and 5S). Interacts with RPS21.

The protein localises to the cytoplasm. Required for the assembly and/or stability of the 40S ribosomal subunit. Required for the processing of the 20S rRNA-precursor to mature 18S rRNA in a late step of the maturation of 40S ribosomal subunits. This chain is Small ribosomal subunit protein uS2, found in Mycosarcoma maydis (Corn smut fungus).